The following is a 91-amino-acid chain: Sec-independent protein translocase protein TatAt (91 aa).

A helical membrane pass occupies residues 9–29; the sequence is FPGLPGGPELLVVLLIVVLLF. Positions 48-91 are disordered; it reads FQRGREEIEDELQDMTGDDDEDDATSESSADSVSTDSVSTESSN. Residues 54–72 are compositionally biased toward acidic residues; that stretch reads EIEDELQDMTGDDDEDDAT. Low complexity predominate over residues 73-91; it reads SESSADSVSTDSVSTESSN.

This sequence belongs to the TatA/E family. As to quaternary structure, forms a complex with TatC. Cytoplasmic and membrane-bound TatA form high-molecular-weight complexes.

It localises to the cell membrane. The protein localises to the cytoplasm. Part of the twin-arginine translocation (Tat) system that transports large folded proteins containing a characteristic twin-arginine motif in their signal peptide across membranes. TatA could form the protein-conducting channel of the Tat system. The chain is Sec-independent protein translocase protein TatAt from Haloferax volcanii (strain ATCC 29605 / DSM 3757 / JCM 8879 / NBRC 14742 / NCIMB 2012 / VKM B-1768 / DS2) (Halobacterium volcanii).